A 478-amino-acid polypeptide reads, in one-letter code: Phenylalanine--tRNA ligase alpha subunit (478 aa).

Residues Thr318, 357 to 359 (QLE), and Tyr397 contribute to the L-phenylalanine site. Glu399 serves as a coordination point for Mg(2+). Position 422 (Phe422) interacts with L-phenylalanine.

Belongs to the class-II aminoacyl-tRNA synthetase family. Phe-tRNA synthetase alpha subunit type 2 subfamily. In terms of assembly, tetramer of two alpha and two beta subunits. Mg(2+) is required as a cofactor.

Its subcellular location is the cytoplasm. The enzyme catalyses tRNA(Phe) + L-phenylalanine + ATP = L-phenylalanyl-tRNA(Phe) + AMP + diphosphate + H(+). This Methanospirillum hungatei JF-1 (strain ATCC 27890 / DSM 864 / NBRC 100397 / JF-1) protein is Phenylalanine--tRNA ligase alpha subunit.